The sequence spans 92 residues: MLTINSDAKLKDLLEFPCSFTYKVMGYAKPELPEKVLEVIQRHAPGDYSPAVKPSAKGNYHSVSINITATSIEQVETLYKELGEIDIVRMVL.

The protein belongs to the UPF0250 family.

This is UPF0250 protein VV0902 from Vibrio vulnificus (strain YJ016).